A 334-amino-acid chain; its full sequence is Glycerol-1-phosphate dehydrogenase [NAD(P)+] (334 aa).

Residues 77–81 and 99–102 each bind NAD(+); these read GRPID and TTAS. Residue Asp-104 coordinates substrate. Residue Ser-108 participates in NAD(+) binding. Asp-147 provides a ligand contact to substrate. Positions 147 and 225 each coordinate Zn(2+). His-229 contacts substrate. A Zn(2+)-binding site is contributed by His-246.

This sequence belongs to the glycerol-1-phosphate dehydrogenase family. The cofactor is Zn(2+).

It localises to the cytoplasm. It catalyses the reaction sn-glycerol 1-phosphate + NAD(+) = dihydroxyacetone phosphate + NADH + H(+). The catalysed reaction is sn-glycerol 1-phosphate + NADP(+) = dihydroxyacetone phosphate + NADPH + H(+). It functions in the pathway membrane lipid metabolism; glycerophospholipid metabolism. In terms of biological role, catalyzes the NAD(P)H-dependent reduction of dihydroxyacetonephosphate (DHAP or glycerone phosphate) to glycerol 1-phosphate (G1P). The G1P thus generated is used as the glycerophosphate backbone of phospholipids in the cellular membranes of Archaea. The protein is Glycerol-1-phosphate dehydrogenase [NAD(P)+] of Methanococcus maripaludis (strain C7 / ATCC BAA-1331).